The following is a 152-amino-acid chain: Ubiquitin-conjugating enzyme E2 N (152 aa).

The 147-residue stretch at 3 to 149 folds into the UBC core domain; the sequence is GLPRRIIKET…ARAWTRLYAM (147 aa). Lys82 carries the N6-acetyllysine modification. The active-site Glycyl thioester intermediate is the Cys87. Residue Lys92 forms a Glycyl lysine isopeptide (Lys-Gly) (interchain with G-Cter in ISG15) linkage. Residue Ser131 is modified to Phosphoserine.

It belongs to the ubiquitin-conjugating enzyme family. In terms of assembly, heterodimer with UBE2V2. Interacts (UBE2V2-UBE2N heterodimer) with the E3 ligase STUB1 (via the U-box domain); the complex has a specific 'Lys-63'-linked polyubiquitination activity. Interacts with RNF8 and RNF168. Interacts with RNF11. Interacts with the E3 ligases, HLTF and SHPRH; the interactions promote the 'Lys-63'-linked polyubiquitination of PCNA upon genotoxic stress and lead to DNA repair. Interacts with ARIH2 (via RING-type 2). Interacts with OTUB1; leading to inhibit E2-conjugating activity. Interacts with GPS2; leading to inhibit E2-conjugating activity. Interacts with RIGI and RNF135; involved in RIGI ubiquitination and activation. Post-translationally, conjugation to ISG15 impairs formation of the thioester bond with ubiquitin but not interaction with UBE2V2.

The enzyme catalyses S-ubiquitinyl-[E1 ubiquitin-activating enzyme]-L-cysteine + [E2 ubiquitin-conjugating enzyme]-L-cysteine = [E1 ubiquitin-activating enzyme]-L-cysteine + S-ubiquitinyl-[E2 ubiquitin-conjugating enzyme]-L-cysteine.. Its pathway is protein modification; protein ubiquitination. Its activity is regulated as follows. Activity is inhibited by binding to OTUB1, which prevents 'Lys-63'-linked polyubiquitination. Activity is inhibited by GPS2, leading to prevent 'Lys-63'-linked polyubiquitination. Its function is as follows. The UBE2V1-UBE2N and UBE2V2-UBE2N heterodimers catalyze the synthesis of non-canonical 'Lys-63'-linked polyubiquitin chains. This type of polyubiquitination does not lead to protein degradation by the proteasome. Mediates transcriptional activation of target genes. Plays a role in the control of progress through the cell cycle and differentiation. Plays a role in the error-free DNA repair pathway and contributes to the survival of cells after DNA damage. Acts together with the E3 ligases, HLTF and SHPRH, in the 'Lys-63'-linked poly-ubiquitination of PCNA upon genotoxic stress, which is required for DNA repair. Appears to act together with E3 ligase RNF5 in the 'Lys-63'-linked polyubiquitination of JKAMP thereby regulating JKAMP function by decreasing its association with components of the proteasome and ERAD. Promotes TRIM5 capsid-specific restriction activity and the UBE2V1-UBE2N heterodimer acts in concert with TRIM5 to generate 'Lys-63'-linked polyubiquitin chains which activate the MAP3K7/TAK1 complex which in turn results in the induction and expression of NF-kappa-B and MAPK-responsive inflammatory genes. Together with RNF135 and UB2V1, catalyzes the viral RNA-dependent 'Lys-63'-linked polyubiquitination of RIGI to activate the downstream signaling pathway that leads to interferon beta production. UBE2V1-UBE2N together with TRAF3IP2 E3 ubiquitin ligase mediate 'Lys-63'-linked polyubiquitination of TRAF6, a component of IL17A-mediated signaling pathway. This Rattus norvegicus (Rat) protein is Ubiquitin-conjugating enzyme E2 N (Ube2n).